Consider the following 226-residue polypeptide: Histone H1.5 (226 aa).

Low complexity predominate over residues 1-16; sequence MSETAPAETATPAPVE. The interval 1–44 is disordered; it reads MSETAPAETATPAPVEKSPAKKKATKKAAGAGAAKRKATGPPVS. S2 is subject to N-acetylserine; partial. At S2 the chain carries Phosphoserine. T11 carries the phosphothreonine; by GSK3 modification. At K17 the chain carries N6-acetyllysine. S18 carries the phosphoserine modification. At K27 the chain carries N6-methyllysine. The residue at position 37 (K37) is an N6-(beta-hydroxybutyryl)lysine; alternate. K37 carries the post-translational modification N6-succinyllysine; alternate. T39 bears the Phosphothreonine mark. The H15 domain maps to 39–112; the sequence is TGPPVSELIT…GASGSFKLNK (74 aa). K49 carries the N6-acetyllysine modification. At K55 the chain carries N6-(beta-hydroxybutyryl)lysine. R57 carries the citrulline modification. K67 bears the N6-(beta-hydroxybutyryl)lysine mark. K78 is modified (N6-acetyllysine). N6-(beta-hydroxybutyryl)lysine is present on residues K88, K93, and K109. Residues 98–226 are disordered; that stretch reads QTKGTGASGS…KAKKAAAKKK (129 aa). The segment covering 122–133 has biased composition (basic residues); sequence KAKKAGAAKAKK. Residues T138 and T155 each carry the phosphothreonine modification. Positions 140–161 are enriched in basic residues; sequence KKAKKAAGAKKAVKKTPKKAKK. K168 carries the post-translational modification N6-acetyllysine. The segment covering 169 to 187 has biased composition (basic residues); it reads KVAKSPKKAKAAAKPKKAT. Phosphoserine occurs at positions 173 and 189. The span at 194–226 shows a compositional bias: basic residues; the sequence is KAVKPKAAKPKAAKPKAAKPKAAKAKKAAAKKK.

The protein belongs to the histone H1/H5 family. In terms of assembly, interacts with MSX1. Post-translationally, H1 histones are progressively phosphorylated during the cell cycle, becoming maximally phosphorylated during late G2 phase and M phase, and being dephosphorylated sharply thereafter. Phosphorylated at Thr-11 by GSK3B during mitosis in prometaphase and dephosphorylated in telophase. Citrullination at Arg-57 (H1R54ci) by PADI4 takes place within the DNA-binding site of H1 and results in its displacement from chromatin and global chromatin decondensation, thereby promoting pluripotency and stem cell maintenance. In terms of tissue distribution, ubiquitous. Expressed in the majority of the cell lines tested and in testis.

It is found in the nucleus. The protein resides in the chromosome. In terms of biological role, histone H1 protein binds to linker DNA between nucleosomes forming the macromolecular structure known as the chromatin fiber. Histones H1 are necessary for the condensation of nucleosome chains into higher-order structured fibers. Also acts as a regulator of individual gene transcription through chromatin remodeling, nucleosome spacing and DNA methylation. The sequence is that of Histone H1.5 from Homo sapiens (Human).